A 443-amino-acid chain; its full sequence is Glutamate--tRNA ligase 2 (443 aa).

The 'HIGH' region signature appears at 7–17 (PSPTGLIHVGN). The 'KMSKS' region motif lies at 240 to 244 (KLSKR). ATP is bound at residue Lys-243.

It belongs to the class-I aminoacyl-tRNA synthetase family. Glutamate--tRNA ligase type 1 subfamily. In terms of assembly, monomer.

The protein resides in the cytoplasm. It catalyses the reaction tRNA(Glu) + L-glutamate + ATP = L-glutamyl-tRNA(Glu) + AMP + diphosphate. Its function is as follows. Catalyzes the attachment of glutamate to tRNA(Glu) in a two-step reaction: glutamate is first activated by ATP to form Glu-AMP and then transferred to the acceptor end of tRNA(Glu). The polypeptide is Glutamate--tRNA ligase 2 (Gluconacetobacter diazotrophicus (strain ATCC 49037 / DSM 5601 / CCUG 37298 / CIP 103539 / LMG 7603 / PAl5)).